A 268-amino-acid polypeptide reads, in one-letter code: Adenosylcobinamide-GDP ribazoletransferase (268 aa).

6 helical membrane-spanning segments follow: residues 54-74, 80-100, 124-144, 150-170, 202-222, and 243-263; these read IAGL…GVLW, AVVL…DGLS, IGVM…AFLA, WLTA…YGIV, ALAL…VWMV, and GALC…SAPM.

This sequence belongs to the CobS family. The cofactor is Mg(2+).

It localises to the cell membrane. The enzyme catalyses alpha-ribazole + adenosylcob(III)inamide-GDP = adenosylcob(III)alamin + GMP + H(+). The catalysed reaction is alpha-ribazole 5'-phosphate + adenosylcob(III)inamide-GDP = adenosylcob(III)alamin 5'-phosphate + GMP + H(+). It functions in the pathway cofactor biosynthesis; adenosylcobalamin biosynthesis; adenosylcobalamin from cob(II)yrinate a,c-diamide: step 7/7. In terms of biological role, joins adenosylcobinamide-GDP and alpha-ribazole to generate adenosylcobalamin (Ado-cobalamin). Also synthesizes adenosylcobalamin 5'-phosphate from adenosylcobinamide-GDP and alpha-ribazole 5'-phosphate. In Roseiflexus sp. (strain RS-1), this protein is Adenosylcobinamide-GDP ribazoletransferase.